Reading from the N-terminus, the 201-residue chain is MQAKTFLLGAALAGVALAAHAEDGTIVITGTITDQTCTIEDPSPGYIKVVHLPTISKSALKNAGDVAGRTRFDIKLKDCPTTVNTLKLYFEPGPTTDYGTKDLKAYKQAWYVDAATLLKSPPSVTEAKGVQIRLMNLNGKQIPMGETEPNQHAAAFSGTMQAGQAKKSFTLHYLAGYVKKASGEVEATMLTTYVGFSVVYP.

The first 21 residues, 1–21 (MQAKTFLLGAALAGVALAAHA), serve as a signal peptide directing secretion. Residues Cys37 and Cys79 are joined by a disulfide bond.

The protein belongs to the fimbrial protein family.

It is found in the fimbrium. Bordetella pertussis is the causative agent of whooping cough. An essential step in the disease process is the attachment of the bacteria to the ciliated epithelium of the respiratory tract, enabling the organism to resist normal host-clearance mechanisms. It is unclear which bacterial cell surface component are responsible for adherence but the fimbriae of B.pertussis are prime candidates for being involved in this process. The protein is Fimbrial protein FimX (fimX) of Bordetella pertussis (strain Tohama I / ATCC BAA-589 / NCTC 13251).